The chain runs to 246 residues: Mast cell protease 2 (246 aa).

Residues 1–19 form the signal peptide; the sequence is MHRPPLPLVLLLLCCRAQA. Positions 20 to 21 are cleaved as a propeptide — activation peptide; it reads GE. The 223-residue stretch at 22–244 folds into the Peptidase S1 domain; that stretch reads IIGGTESKPH…YRPWIDEVLK (223 aa). Cysteines 51 and 67 form a disulfide. Catalysis depends on charge relay system residues His66 and Asp109. An N-linked (GlcNAc...) asparagine glycan is attached at Asn120. Intrachain disulfides connect Cys143-Cys208 and Cys174-Cys187. Ser202 serves as the catalytic Charge relay system.

This sequence belongs to the peptidase S1 family. Granzyme subfamily.

The protein localises to the secreted. Its subcellular location is the cytoplasmic granule. Functionally, putative mast cell chymase. This is Mast cell protease 2 from Ovis aries (Sheep).